The primary structure comprises 255 residues: 5'-nucleotidase SurE (255 aa).

Residues Asp8, Asp9, Ser40, and Asn93 each coordinate a divalent metal cation.

It belongs to the SurE nucleotidase family. Requires a divalent metal cation as cofactor.

The protein resides in the cytoplasm. It carries out the reaction a ribonucleoside 5'-phosphate + H2O = a ribonucleoside + phosphate. Nucleotidase that shows phosphatase activity on nucleoside 5'-monophosphates. This chain is 5'-nucleotidase SurE, found in Nitrobacter winogradskyi (strain ATCC 25391 / DSM 10237 / CIP 104748 / NCIMB 11846 / Nb-255).